Reading from the N-terminus, the 141-residue chain is Putative nickel-responsive regulator (141 aa).

Ni(2+)-binding residues include His-80, His-91, His-93, and Cys-99.

Belongs to the transcriptional regulatory CopG/NikR family. Ni(2+) serves as cofactor.

Its function is as follows. Transcriptional regulator. The sequence is that of Putative nickel-responsive regulator from Methanococcus maripaludis (strain C6 / ATCC BAA-1332).